A 331-amino-acid chain; its full sequence is Isopentenyl-diphosphate delta-isomerase (331 aa).

Substrate is bound at residue 4–5; that stretch reads RK. Residues 59–61, Ser-89, and Asn-116 each bind FMN; that span reads AMT. Gln-146 contacts substrate. Glu-147 contacts Mg(2+). Residues Lys-178, Ser-203, Thr-208, 252–254, and 273–274 each bind FMN; these read GIR and SR.

Belongs to the IPP isomerase type 2 family. As to quaternary structure, homooctamer. Dimer of tetramers. Requires FMN as cofactor. NADPH serves as cofactor. The cofactor is Mg(2+).

It localises to the cytoplasm. It catalyses the reaction isopentenyl diphosphate = dimethylallyl diphosphate. Its function is as follows. Involved in the biosynthesis of isoprenoids. Catalyzes the 1,3-allylic rearrangement of the homoallylic substrate isopentenyl (IPP) to its allylic isomer, dimethylallyl diphosphate (DMAPP). This chain is Isopentenyl-diphosphate delta-isomerase, found in Streptococcus mutans serotype c (strain ATCC 700610 / UA159).